The following is a 247-amino-acid chain: Phosphoribosylaminoimidazole-succinocarboxamide synthase (247 aa).

The protein belongs to the SAICAR synthetase family.

The catalysed reaction is 5-amino-1-(5-phospho-D-ribosyl)imidazole-4-carboxylate + L-aspartate + ATP = (2S)-2-[5-amino-1-(5-phospho-beta-D-ribosyl)imidazole-4-carboxamido]succinate + ADP + phosphate + 2 H(+). It participates in purine metabolism; IMP biosynthesis via de novo pathway; 5-amino-1-(5-phospho-D-ribosyl)imidazole-4-carboxamide from 5-amino-1-(5-phospho-D-ribosyl)imidazole-4-carboxylate: step 1/2. The protein is Phosphoribosylaminoimidazole-succinocarboxamide synthase of Prochlorococcus marinus (strain NATL1A).